Here is a 540-residue protein sequence, read N- to C-terminus: MTLNSLPAWNSLQTHYGQIRDARLRDWFAPENDPAPTRAERFTLSGGGLAADFSKNRITDDTLKLLVQLAREAQVETRRDAMFAGETVNPTEGRAVLHTALRASNPTSPFYGKVQAERAKMAAFADKVRSGEWTGYTGKRIRHVVNIGIGGSDLGPKMVVHALQHLATPEISTHFVSNVDGADLYRVLQQINPEETLAIIVSKTFTTLETMTNANSLRDWFIQKGCPESELAKHFVGVSANPAEVVKFGIAQENVFEMWDWVGGRYSLWSAVGLSIVIAIGPKQFDELLAGANEMDEHFRSAPLERNLPVLMGMIGIWYRNFFGSQSYLVAPYSEALHFLPSYLQQLEMESNGKQACLDGSFVTYDTSAVTWGEPGTNGQHAFFQMLHQGPTIVPIDFVAVLTPEHPLVSHHPKLLANCFAQSEALMLGRTREEAEKVAGRDKPDLVPHIMFPGNRPTTTLLVDALTARSLGALIALYEHKVLVQGTVWNINSFDQWGVELGKILGKVVEADLTAATVDETKHDSSTSALIARARAALKR.

Glutamate 350 acts as the Proton donor in catalysis. Active-site residues include histidine 381 and lysine 503.

This sequence belongs to the GPI family.

Its subcellular location is the cytoplasm. The enzyme catalyses alpha-D-glucose 6-phosphate = beta-D-fructose 6-phosphate. The protein operates within carbohydrate biosynthesis; gluconeogenesis. Its pathway is carbohydrate degradation; glycolysis; D-glyceraldehyde 3-phosphate and glycerone phosphate from D-glucose: step 2/4. Its function is as follows. Catalyzes the reversible isomerization of glucose-6-phosphate to fructose-6-phosphate. The protein is Glucose-6-phosphate isomerase of Paraburkholderia phymatum (strain DSM 17167 / CIP 108236 / LMG 21445 / STM815) (Burkholderia phymatum).